The chain runs to 226 residues: 7-cyano-7-deazaguanine synthase (226 aa).

Position 8 to 18 (8 to 18 (ISGGLDSTTCL)) interacts with ATP. Positions 188, 198, 201, and 204 each coordinate Zn(2+).

The protein belongs to the QueC family. The cofactor is Zn(2+).

It carries out the reaction 7-carboxy-7-deazaguanine + NH4(+) + ATP = 7-cyano-7-deazaguanine + ADP + phosphate + H2O + H(+). The protein operates within purine metabolism; 7-cyano-7-deazaguanine biosynthesis. Its function is as follows. Catalyzes the ATP-dependent conversion of 7-carboxy-7-deazaguanine (CDG) to 7-cyano-7-deazaguanine (preQ(0)). The protein is 7-cyano-7-deazaguanine synthase of Coxiella burnetii (strain RSA 493 / Nine Mile phase I).